We begin with the raw amino-acid sequence, 565 residues long: Periplasmic trehalase (565 aa).

The signal sequence occupies residues Met1–Ala30. Substrate is bound by residues Arg152, Trp159 to Asp160, Asn196, Arg205 to Gln207, Arg277 to Glu279, and Gly310. Catalysis depends on proton donor/acceptor residues Asp312 and Glu496. A substrate-binding site is contributed by Glu511. The segment at Cys539–Pro565 is disordered.

The protein belongs to the glycosyl hydrolase 37 family. In terms of assembly, monomer.

The protein localises to the periplasm. The enzyme catalyses alpha,alpha-trehalose + H2O = alpha-D-glucose + beta-D-glucose. Its function is as follows. Provides the cells with the ability to utilize trehalose at high osmolarity by splitting it into glucose molecules that can subsequently be taken up by the phosphotransferase-mediated uptake system. This is Periplasmic trehalase from Escherichia coli O45:K1 (strain S88 / ExPEC).